Reading from the N-terminus, the 2670-residue chain is Inositol 1,4,5-trisphosphate-gated calcium channel ITPR3 (2670 aa).

The Cytoplasmic segment spans residues 1-2233; it reads MNEMSSFLHI…YVEGASTGVL (2233 aa). MIR domains lie at 113 to 173, 174 to 224, 232 to 288, 295 to 372, and 378 to 434; these read GDVV…LRSN, GDNV…INLF, EEVL…VEVV, GGAG…LDPT, and DSFV…IVSV. 1D-myo-inositol 1,4,5-trisphosphate-binding residues include arginine 266, leucine 269, and arginine 270. 6 residues coordinate 1D-myo-inositol 1,4,5-trisphosphate: arginine 503, lysine 507, arginine 510, tyrosine 567, arginine 568, and lysine 569. Arginine 743 contributes to the Ca(2+) binding site. Phosphoserine occurs at positions 916 and 934. Residues glutamate 1122 and glutamate 1125 each coordinate Ca(2+). Positions 1138–1153 are enriched in basic and acidic residues; the sequence is EVEAGATKDKKERPSD. 2 disordered regions span residues 1138–1164 and 1807–1835; these read EVEAGATKDKKERPSDEEGFLQPHGEK and NMSDLGSQPREDREPADPATKGRVSSFSM. Serine 1813, serine 1832, and serine 1834 each carry phosphoserine. The Ca(2+) site is built by glutamate 1881 and glutamate 1945. ATP is bound by residues alanine 1995, glutamate 2148, and lysine 2151. Residues 2234–2254 form a helical membrane-spanning segment; the sequence is GSPLISLLFWILICFSIAALF. The Extracellular portion of the chain corresponds to 2255–2262; the sequence is TKRYSVRP. The chain crosses the membrane as a helical span at residues 2263–2283; the sequence is LIVALILRSIYYLGIGPTLNI. The Cytoplasmic portion of the chain corresponds to 2284–2292; the sequence is LGALNLTNK. Residues 2293 to 2310 traverse the membrane as a helical segment; sequence IVFVVSFVGNRGTFIRGY. Residues 2311–2324 lie on the Extracellular side of the membrane; that stretch reads KAMVMDMEFLYHVG. Residues 2325-2345 form a helical membrane-spanning segment; the sequence is YILTSVLGLFAHELFYSILLF. At 2346 to 2367 the chain is on the cytoplasmic side; the sequence is DLIYREETLFNVIKSVTRNGRS. The helical transmembrane segment at 2368–2388 threads the bilayer; that stretch reads ILLTALLALILVYLFSIVGFL. Over 2389-2495 the chain is Extracellular; sequence FLKDDFILEV…ESLFPARVVY (107 aa). Cysteine 2454 and cysteine 2460 are oxidised to a cystine. Residues 2496 to 2516 form a helical membrane-spanning segment; the sequence is DLLFFFIVIIIVLNLIFGVII. Residues 2517 to 2670 lie on the Cytoplasmic side of the membrane; sequence DTFADLRSEK…FVDVQNCMSR (154 aa). Residues cysteine 2537 and phenylalanine 2538 each coordinate ATP. Zn(2+) is bound at residue cysteine 2537. Cysteine 2540 and histidine 2557 together coordinate Zn(2+). ATP is bound by residues lysine 2559, histidine 2562, asparagine 2563, and methionine 2564. A Zn(2+)-binding site is contributed by histidine 2562. A Ca(2+)-binding site is contributed by threonine 2580. Phosphoserine occurs at positions 2608 and 2669.

The protein belongs to the InsP3 receptor family. In terms of assembly, homodimer. Homotetramer. Interacts with TRPC1, TRPC3, TRPC4. Interacts with TRPV4. Interacts with SIGMAR1. Found in a complex with AKT1 and PML; this interaction modulates IP3R3-phosphorylation and in turn ITPR3-dependent calcium release. Interacts with IRAG2 (via coiled-coil domain). Interacts with CABP1. Interacts with TMBIM4/LFG4. Interacts with CEMIP. Interacts with TESPA1. Interacts with TMEM203. Interacts with BOK; regulates ITPR3 expression. Interacts with BCL2L10. Interacts with CHGA and CHGB. Phosphorylated by AKT1 on serine and/or threonine residues.

It is found in the endoplasmic reticulum membrane. The protein resides in the cytoplasmic vesicle. Its subcellular location is the secretory vesicle membrane. It catalyses the reaction Ca(2+)(in) = Ca(2+)(out). Inositol 1,4,5-trisphosphate-gated calcium channel is regulated by cytosolic calcium in a biphasic manner. At low concentrations, cytosolic calcium binds at a high-affinity juxtamembrane domain (JD) calcium binding site, allowing ITPR3 to activate by escaping a low-energy resting state through an ensemble of preactivated states. At high cytosolic calcium concentrations, ITPR3 preferentially enters an inhibited state stabilized by calcium binding at a second, low-affinity cytoplasmic domain (CD) calcium binding site. Functionally, inositol 1,4,5-trisphosphate-gated calcium channel that, upon 1D-myo-inositol 1,4,5-trisphosphate binding, transports calcium from the endoplasmic reticulum lumen to cytoplasm, thus releasing the intracellular calcium and therefore participates in cellular calcium ion homeostasis. 1D-myo-inositol 1,4,5-trisphosphate binds to the ligand-free channel without altering its global conformation, yielding the low-energy resting state, then progresses through resting-to preactivated transitions to the higher energy preactivated state, which increases affinity for calcium, promoting binding of the low basal cytosolic calcium at the juxtamembrane domain (JD) site, favoring the transition through the ensemble of high-energy intermediate states along the trajectory to the fully-open activated state. Upon opening, releases calcium in the cytosol where it can bind to the low-affinity cytoplasmic domain (CD) site and stabilizes the inhibited state to terminate calcium release. This chain is Inositol 1,4,5-trisphosphate-gated calcium channel ITPR3, found in Mus musculus (Mouse).